A 379-amino-acid polypeptide reads, in one-letter code: Carbamoyl phosphate synthase small chain (379 aa).

Residues 1 to 183 are CPSase; the sequence is MTSQDRSEAV…EAYVVEPDGE (183 aa). L-glutamine is bound by residues Ser-51, Gly-235, and Gly-237. The Glutamine amidotransferase type-1 domain occupies 185-379; that stretch reads LYTVVAYDMG…FVELIQANKK (195 aa). Residue Cys-263 is the Nucleophile of the active site. The L-glutamine site is built by Phe-264, Gln-267, Asn-305, Gly-307, and Phe-308. Catalysis depends on residues His-353 and Glu-355.

It belongs to the CarA family. As to quaternary structure, composed of two chains; the small (or glutamine) chain promotes the hydrolysis of glutamine to ammonia, which is used by the large (or ammonia) chain to synthesize carbamoyl phosphate. Tetramer of heterodimers (alpha,beta)4.

It catalyses the reaction hydrogencarbonate + L-glutamine + 2 ATP + H2O = carbamoyl phosphate + L-glutamate + 2 ADP + phosphate + 2 H(+). It carries out the reaction L-glutamine + H2O = L-glutamate + NH4(+). Its pathway is amino-acid biosynthesis; L-arginine biosynthesis; carbamoyl phosphate from bicarbonate: step 1/1. It functions in the pathway pyrimidine metabolism; UMP biosynthesis via de novo pathway; (S)-dihydroorotate from bicarbonate: step 1/3. Functionally, small subunit of the glutamine-dependent carbamoyl phosphate synthetase (CPSase). CPSase catalyzes the formation of carbamoyl phosphate from the ammonia moiety of glutamine, carbonate, and phosphate donated by ATP, constituting the first step of 2 biosynthetic pathways, one leading to arginine and/or urea and the other to pyrimidine nucleotides. The small subunit (glutamine amidotransferase) binds and cleaves glutamine to supply the large subunit with the substrate ammonia. This chain is Carbamoyl phosphate synthase small chain, found in Corynebacterium diphtheriae (strain ATCC 700971 / NCTC 13129 / Biotype gravis).